Reading from the N-terminus, the 586-residue chain is CTP synthase 2 (586 aa).

One can recognise a Glutamine amidotransferase type-1 domain in the interval 300 to 554 (SIALVGKYTK…LAATGNLNAY (255 aa)). Catalysis depends on for GATase activity residues C399, H526, and E528. Positions 563–586 (SSDRYSDASDDSFSEPRIAELEIS) are disordered. 3 positions are modified to phosphoserine: S568, S571, and S574.

The protein belongs to the CTP synthase family.

The enzyme catalyses UTP + L-glutamine + ATP + H2O = CTP + L-glutamate + ADP + phosphate + 2 H(+). The protein operates within pyrimidine metabolism; CTP biosynthesis via de novo pathway; CTP from UDP: step 2/2. Its function is as follows. Catalyzes the ATP-dependent amination of UTP to CTP with either L-glutamine or ammonia as the source of nitrogen. Constitutes the rate-limiting enzyme in the synthesis of cytosine nucleotides. The polypeptide is CTP synthase 2 (CTPS2) (Homo sapiens (Human)).